The following is a 247-amino-acid chain: Isoprenyl transferase (247 aa).

The active site involves D18. D18 provides a ligand contact to Mg(2+). Substrate is bound by residues 19–22, W23, R31, H35, and 63–65; these read GNGR and SSE. The Proton acceptor role is filled by N66. Substrate-binding positions include W67, R69, R186, and 192–194; that span reads RLS. E205 lines the Mg(2+) pocket.

It belongs to the UPP synthase family. Homodimer. The cofactor is Mg(2+).

Catalyzes the condensation of isopentenyl diphosphate (IPP) with allylic pyrophosphates generating different type of terpenoids. The sequence is that of Isoprenyl transferase from Agrobacterium fabrum (strain C58 / ATCC 33970) (Agrobacterium tumefaciens (strain C58)).